Here is a 556-residue protein sequence, read N- to C-terminus: tRNA (guanine(37)-N(1))-methyltransferase (556 aa).

The N-terminal 30 residues, 1–30, are a transit peptide targeting the mitochondrion; sequence MIITTKALTVLPHSGLRTTHRSLLARLRHY. S-adenosyl-L-methionine is bound by residues His249, 287–288, 315–316, and Asn346; these read DL and DA. Disordered regions lie at residues 444–465 and 524–556; these read QHEE…KMKD and KKAA…EMQM. Basic and acidic residues-rich tracts occupy residues 454 to 465 and 540 to 549; these read EEAKRPSNKMKD and SKPDTKKIEA.

This sequence belongs to the class I-like SAM-binding methyltransferase superfamily. TRM5/TYW2 family. Monomer.

It localises to the mitochondrion matrix. The protein localises to the nucleus. Its subcellular location is the cytoplasm. It catalyses the reaction guanosine(37) in tRNA + S-adenosyl-L-methionine = N(1)-methylguanosine(37) in tRNA + S-adenosyl-L-homocysteine + H(+). Its function is as follows. Specifically methylates the N1 position of guanosine-37 in various cytoplasmic and mitochondrial tRNAs. Methylation is not dependent on the nature of the nucleoside 5' of the target nucleoside. This is the first step in the biosynthesis of wybutosine (yW), a modified base adjacent to the anticodon of tRNAs and required for accurate decoding. The polypeptide is tRNA (guanine(37)-N(1))-methyltransferase (Anopheles gambiae (African malaria mosquito)).